Reading from the N-terminus, the 103-residue chain is Large ribosomal subunit protein bL21 (103 aa).

Belongs to the bacterial ribosomal protein bL21 family. As to quaternary structure, part of the 50S ribosomal subunit. Contacts protein L20.

Its function is as follows. This protein binds to 23S rRNA in the presence of protein L20. The sequence is that of Large ribosomal subunit protein bL21 from Clostridium kluyveri (strain NBRC 12016).